Consider the following 1155-residue polypeptide: DNA-directed RNA polymerase subunit beta (1155 aa).

This sequence belongs to the RNA polymerase beta chain family. In terms of assembly, the RNAP catalytic core consists of 2 alpha, 1 beta, 1 beta' and 1 omega subunit. When a sigma factor is associated with the core the holoenzyme is formed, which can initiate transcription.

The enzyme catalyses RNA(n) + a ribonucleoside 5'-triphosphate = RNA(n+1) + diphosphate. In terms of biological role, DNA-dependent RNA polymerase catalyzes the transcription of DNA into RNA using the four ribonucleoside triphosphates as substrates. The sequence is that of DNA-directed RNA polymerase subunit beta from Borrelia recurrentis (strain A1).